Here is a 365-residue protein sequence, read N- to C-terminus: Peptide chain release factor 2 (365 aa).

An N5-methylglutamine modification is found at glutamine 251.

Belongs to the prokaryotic/mitochondrial release factor family. In terms of processing, methylated by PrmC. Methylation increases the termination efficiency of RF2.

It localises to the cytoplasm. Functionally, peptide chain release factor 2 directs the termination of translation in response to the peptide chain termination codons UGA and UAA. This is Peptide chain release factor 2 from Campylobacter jejuni subsp. doylei (strain ATCC BAA-1458 / RM4099 / 269.97).